Reading from the N-terminus, the 361-residue chain is Membrane-bound lytic murein transglycosylase B (361 aa).

An N-terminal signal peptide occupies residues 1-18 (MFKRRYVTLLPLFVLLAA). Cysteine 19 carries N-palmitoyl cysteine lipidation. Cysteine 19 carries the S-diacylglycerol cysteine lipid modification. Glutamate 162 is a catalytic residue.

As to quaternary structure, monomer.

It localises to the cell outer membrane. It carries out the reaction Exolytic cleavage of the (1-&gt;4)-beta-glycosidic linkage between N-acetylmuramic acid (MurNAc) and N-acetylglucosamine (GlcNAc) residues in peptidoglycan, from either the reducing or the non-reducing ends of the peptidoglycan chains, with concomitant formation of a 1,6-anhydrobond in the MurNAc residue.. Its function is as follows. Murein-degrading enzyme. Catalyzes the cleavage of the glycosidic bonds between N-acetylmuramic acid and N-acetylglucosamine residues in peptidoglycan. May play a role in recycling of muropeptides during cell elongation and/or cell division. The protein is Membrane-bound lytic murein transglycosylase B (mltB) of Escherichia coli (strain K12).